We begin with the raw amino-acid sequence, 686 residues long: DNA ligase 1 (686 aa).

NAD(+) contacts are provided by residues 35 to 39, 84 to 85, and E119; these read DFEYD and SL. The active-site N6-AMP-lysine intermediate is K121. NAD(+) is bound by residues R142, E177, K293, and K317. Zn(2+)-binding residues include C411, C414, C429, and C434. Positions 602–686 constitute a BRCT domain; that stretch reads RVGEQLAGLT…LAEKGAPPLP (85 aa).

Belongs to the NAD-dependent DNA ligase family. LigA subfamily. It depends on Mg(2+) as a cofactor. Mn(2+) is required as a cofactor.

It carries out the reaction NAD(+) + (deoxyribonucleotide)n-3'-hydroxyl + 5'-phospho-(deoxyribonucleotide)m = (deoxyribonucleotide)n+m + AMP + beta-nicotinamide D-nucleotide.. DNA ligase that catalyzes the formation of phosphodiester linkages between 5'-phosphoryl and 3'-hydroxyl groups in double-stranded DNA using NAD as a coenzyme and as the energy source for the reaction. It is essential for DNA replication and repair of damaged DNA. The chain is DNA ligase 1 from Deinococcus deserti (strain DSM 17065 / CIP 109153 / LMG 22923 / VCD115).